Here is a 464-residue protein sequence, read N- to C-terminus: L-cysteine:1D-myo-inositol 2-amino-2-deoxy-alpha-D-glucopyranoside ligase (464 aa).

Residue Cys-67 participates in Zn(2+) binding. Residues 67-70 (CGIT), Thr-82, and 105-107 (NVT) contribute to the L-cysteinyl-5'-AMP site. Residues 69–79 (ITPYDATHLGH) carry the 'HIGH' region motif. The 'ERGGDP' region signature appears at 207–212 (ERGGDP). Residue Trp-247 coordinates L-cysteinyl-5'-AMP. Cys-251 serves as a coordination point for Zn(2+). 269–271 (GTD) lines the L-cysteinyl-5'-AMP pocket. His-276 provides a ligand contact to Zn(2+). Val-303 serves as a coordination point for L-cysteinyl-5'-AMP. Positions 309 to 313 (KMSKS) match the 'KMSKS' region motif. The interval 410–435 (AGGSAGAGPDPTHQGGPVRGSGGDVP) is disordered.

The protein belongs to the class-I aminoacyl-tRNA synthetase family. MshC subfamily. As to quaternary structure, monomer. Zn(2+) is required as a cofactor.

The catalysed reaction is 1D-myo-inositol 2-amino-2-deoxy-alpha-D-glucopyranoside + L-cysteine + ATP = 1D-myo-inositol 2-(L-cysteinylamino)-2-deoxy-alpha-D-glucopyranoside + AMP + diphosphate + H(+). Its function is as follows. Catalyzes the ATP-dependent condensation of GlcN-Ins and L-cysteine to form L-Cys-GlcN-Ins. The polypeptide is L-cysteine:1D-myo-inositol 2-amino-2-deoxy-alpha-D-glucopyranoside ligase (Frankia casuarinae (strain DSM 45818 / CECT 9043 / HFP020203 / CcI3)).